A 375-amino-acid polypeptide reads, in one-letter code: 23S rRNA (uracil(747)-C(5))-methyltransferase RlmC (375 aa).

[4Fe-4S] cluster contacts are provided by cysteine 3, cysteine 11, cysteine 14, and cysteine 87. Residues glutamine 212, phenylalanine 241, glutamate 262, and asparagine 307 each contribute to the S-adenosyl-L-methionine site. Cysteine 334 serves as the catalytic Nucleophile.

It belongs to the class I-like SAM-binding methyltransferase superfamily. RNA M5U methyltransferase family. RlmC subfamily.

The enzyme catalyses uridine(747) in 23S rRNA + S-adenosyl-L-methionine = 5-methyluridine(747) in 23S rRNA + S-adenosyl-L-homocysteine + H(+). Its function is as follows. Catalyzes the formation of 5-methyl-uridine at position 747 (m5U747) in 23S rRNA. This Escherichia coli (strain K12 / MC4100 / BW2952) protein is 23S rRNA (uracil(747)-C(5))-methyltransferase RlmC.